The following is a 226-amino-acid chain: ATP synthase F(0) complex subunit a (226 aa).

6 helical membrane-spanning segments follow: residues Phe6 to Phe26, Trp68 to Leu88, Gln97 to Phe117, Ile138 to Val158, Ile164 to Ile184, and Ala189 to Ile209.

The protein belongs to the ATPase A chain family. Component of the ATP synthase complex composed at least of ATP5F1A/subunit alpha, ATP5F1B/subunit beta, ATP5MC1/subunit c (homooctomer), MT-ATP6/subunit a, MT-ATP8/subunit 8, ATP5ME/subunit e, ATP5MF/subunit f, ATP5MG/subunit g, ATP5MK/subunit k, ATP5MJ/subunit j, ATP5F1C/subunit gamma, ATP5F1D/subunit delta, ATP5F1E/subunit epsilon, ATP5PF/subunit F6, ATP5PB/subunit b, ATP5PD/subunit d, ATP5PO/subunit OSCP. ATP synthase complex consists of a soluble F(1) head domain (subunits alpha(3) and beta(3)) - the catalytic core - and a membrane F(0) domain - the membrane proton channel (subunits c, a, 8, e, f, g, k and j). These two domains are linked by a central stalk (subunits gamma, delta, and epsilon) rotating inside the F1 region and a stationary peripheral stalk (subunits F6, b, d, and OSCP). Interacts with DNAJC30; interaction is direct.

It is found in the mitochondrion inner membrane. The catalysed reaction is H(+)(in) = H(+)(out). Subunit a, of the mitochondrial membrane ATP synthase complex (F(1)F(0) ATP synthase or Complex V) that produces ATP from ADP in the presence of a proton gradient across the membrane which is generated by electron transport complexes of the respiratory chain. ATP synthase complex consist of a soluble F(1) head domain - the catalytic core - and a membrane F(1) domain - the membrane proton channel. These two domains are linked by a central stalk rotating inside the F(1) region and a stationary peripheral stalk. During catalysis, ATP synthesis in the catalytic domain of F(1) is coupled via a rotary mechanism of the central stalk subunits to proton translocation. With the subunit c (ATP5MC1), forms the proton-conducting channel in the F(0) domain, that contains two crucial half-channels (inlet and outlet) that facilitate proton movement from the mitochondrial intermembrane space (IMS) into the matrix. Protons are taken up via the inlet half-channel and released through the outlet half-channel, following a Grotthuss mechanism. The chain is ATP synthase F(0) complex subunit a from Mus musculus (Mouse).